Here is a 357-residue protein sequence, read N- to C-terminus: Cell division control protein 10 (357 aa).

Residues 34–306 (RGFQFNIMVV…ETFRSKQLIA (273 aa)) form the Septin-type G domain. The G1 motif stretch occupies residues 44–51 (GRSGLGKS). Residues 44–51 (GRSGLGKS), Thr78, Gly104, 184–192 (KSDSLTLDE), Gly240, and Arg255 each bind GTP. Residues 101–104 (DTPG) form a G3 motif region. Positions 183–186 (AKSD) are G4 motif. The disordered stretch occupies residues 310–357 (NASNPNRQSQLQKDQGQTSQQSNQDLKNTSGVPNAPMFQSTTGTAAAR).

This sequence belongs to the TRAFAC class TrmE-Era-EngA-EngB-Septin-like GTPase superfamily. Septin GTPase family.

The protein localises to the bud neck. Functionally, plays a role in the cell cycle. Involved in the formation of the ring of filaments in the neck region at the mother-bud junction during mitosis. The polypeptide is Cell division control protein 10 (CDC10) (Candida albicans (strain SC5314 / ATCC MYA-2876) (Yeast)).